We begin with the raw amino-acid sequence, 1400 residues long: DNA-directed RNA polymerase subunit beta' (1400 aa).

Zn(2+)-binding residues include Cys-71, Cys-73, Cys-86, and Cys-89. Mg(2+) is bound by residues Asp-462, Asp-464, and Asp-466. Zn(2+)-binding residues include Cys-820, Cys-893, Cys-900, and Cys-903.

The protein belongs to the RNA polymerase beta' chain family. As to quaternary structure, the RNAP catalytic core consists of 2 alpha, 1 beta, 1 beta' and 1 omega subunit. When a sigma factor is associated with the core the holoenzyme is formed, which can initiate transcription. It depends on Mg(2+) as a cofactor. The cofactor is Zn(2+).

It carries out the reaction RNA(n) + a ribonucleoside 5'-triphosphate = RNA(n+1) + diphosphate. In terms of biological role, DNA-dependent RNA polymerase catalyzes the transcription of DNA into RNA using the four ribonucleoside triphosphates as substrates. This chain is DNA-directed RNA polymerase subunit beta', found in Methylobacterium nodulans (strain LMG 21967 / CNCM I-2342 / ORS 2060).